The chain runs to 214 residues: Nicotinamidase (214 aa).

Asp-18 acts as the Proton acceptor in catalysis. Positions 56, 58, 62, and 91 each coordinate a divalent metal cation. Lys-116 is a catalytic residue. Cys-161 functions as the Nucleophile in the catalytic mechanism.

Belongs to the isochorismatase family. It depends on a divalent metal cation as a cofactor.

It carries out the reaction nicotinamide + H2O = nicotinate + NH4(+). Its pathway is cofactor biosynthesis; nicotinate biosynthesis; nicotinate from nicotinamide: step 1/1. Catalyzes the deamidation of nicotinamide (NAM) into nicotinate (Na). Functions in the deamidating salvage pathway for production of NAD from nicotinamide. The polypeptide is Nicotinamidase (Acinetobacter baylyi (strain ATCC 33305 / BD413 / ADP1)).